The sequence spans 489 residues: L-asparagine permease 1 (489 aa).

12 helical membrane passes run 25 to 45, 49 to 69, 100 to 120, 137 to 157, 162 to 182, 210 to 230, 255 to 275, 289 to 309, 344 to 364, 369 to 389, 413 to 433, and 439 to 459; these read QLQM…GAGG, KAGP…FLIL, AVGW…TTAI, ILAL…VEWF, FWAA…GTVF, WLPL…VELV, IAIF…YTAY, IGFH…ALSS, YGGI…NAFK, FEIV…TIVL, SPYS…TMAS, and TWTV…WYLV.

It belongs to the amino acid-polyamine-organocation (APC) superfamily. Amino acid transporter (AAT) (TC 2.A.3.1) family.

The protein localises to the cell membrane. The polypeptide is L-asparagine permease 1 (ansP1) (Mycobacterium tuberculosis (strain CDC 1551 / Oshkosh)).